We begin with the raw amino-acid sequence, 175 residues long: MGSEENNSTSFPPTEPKLCDNGCGFFGSPSNMNLCSKCYRSLRAEEDQTAVAKAAVKNSLKLPSCSIIAPGQKHPLEIKPAHLETVVVTAEPSSVPVAAEQDEAEPSRPVRPNNRCFSCNKKVGVMGFKCKCGSTFCGSHRYPEKHECSFDFKEVGRDAIAKANPLVKADKVQRI.

Residues 13 to 47 (PTEPKLCDNGCGFFGSPSNMNLCSKCYRSLRAEED) form an A20-type zinc finger. The Zn(2+) site is built by Cys19, Cys23, Cys35, Cys38, Cys116, Cys119, Cys130, Cys132, Cys137, His140, His146, and Cys148. The AN1-type zinc finger occupies 110–156 (VRPNNRCFSCNKKVGVMGFKCKCGSTFCGSHRYPEKHECSFDFKEVG).

Functionally, may be involved in environmental stress response. The protein is Zinc finger A20 and AN1 domain-containing stress-associated protein 7 (SAP7) of Arabidopsis thaliana (Mouse-ear cress).